Here is a 336-residue protein sequence, read N- to C-terminus: tRNA N6-adenosine threonylcarbamoyltransferase (336 aa).

The Fe cation site is built by H112 and H116. Substrate-binding positions include L136 to G140, D169, G182, and N276. D304 lines the Fe cation pocket.

The protein belongs to the KAE1 / TsaD family. The cofactor is Fe(2+).

The protein resides in the cytoplasm. The enzyme catalyses L-threonylcarbamoyladenylate + adenosine(37) in tRNA = N(6)-L-threonylcarbamoyladenosine(37) in tRNA + AMP + H(+). Required for the formation of a threonylcarbamoyl group on adenosine at position 37 (t(6)A37) in tRNAs that read codons beginning with adenine. Is involved in the transfer of the threonylcarbamoyl moiety of threonylcarbamoyl-AMP (TC-AMP) to the N6 group of A37, together with TsaE and TsaB. TsaD likely plays a direct catalytic role in this reaction. The chain is tRNA N6-adenosine threonylcarbamoyltransferase from Francisella tularensis subsp. holarctica (strain FTNF002-00 / FTA).